The following is a 72-amino-acid chain: Cytochrome b-c1 complex subunit 8-2, mitochondrial (72 aa).

Over 1–41 the chain is Mitochondrial matrix; sequence MGKQPVKLKAVVYALSPFQQKIMTGLWKDLPEKIHHKVSEN. Residues 42-58 traverse the membrane as a helical segment; the sequence is WISTILLVAPVVGTYSY. At 59–72 the chain is on the mitochondrial intermembrane side; sequence AQYFKEQEKLEHRF.

The protein belongs to the UQCRQ/QCR8 family. As to quaternary structure, component of the ubiquinol-cytochrome c oxidoreductase (cytochrome b-c1 complex, complex III, CIII), a multisubunit enzyme composed of 10 subunits. The complex is composed of 3 respiratory subunits cytochrome b (MT-CYB), cytochrome c1 (CYC1-1 or CYC1-2) and Rieske protein (UCR1-1 or UCR1-2), 2 core protein subunits MPPalpha1 (or MPPalpha2) and MPPB, and 5 low-molecular weight protein subunits QCR7-1 (or QCR7-2), UCRQ-1 (or UCRQ-2), QCR9, UCRY and probably QCR6-1 (or QCR6-2). The complex exists as an obligatory dimer and forms supercomplexes (SCs) in the inner mitochondrial membrane with NADH-ubiquinone oxidoreductase (complex I, CI), resulting in different assemblies (supercomplexes SCI(1)III(2) and SCI(2)III(4)).

The protein resides in the mitochondrion inner membrane. Its function is as follows. Component of the ubiquinol-cytochrome c oxidoreductase, a multisubunit transmembrane complex that is part of the mitochondrial electron transport chain which drives oxidative phosphorylation. The respiratory chain contains 3 multisubunit complexes succinate dehydrogenase (complex II, CII), ubiquinol-cytochrome c oxidoreductase (cytochrome b-c1 complex, complex III, CIII) and cytochrome c oxidase (complex IV, CIV), that cooperate to transfer electrons derived from NADH and succinate to molecular oxygen, creating an electrochemical gradient over the inner membrane that drives transmembrane transport and the ATP synthase. The cytochrome b-c1 complex catalyzes electron transfer from ubiquinol to cytochrome c, linking this redox reaction to translocation of protons across the mitochondrial inner membrane, with protons being carried across the membrane as hydrogens on the quinol. In the process called Q cycle, 2 protons are consumed from the matrix, 4 protons are released into the intermembrane space and 2 electrons are passed to cytochrome c. The polypeptide is Cytochrome b-c1 complex subunit 8-2, mitochondrial (UCRQ-2) (Arabidopsis thaliana (Mouse-ear cress)).